The following is a 255-amino-acid chain: Hydroxyacylglutathione hydrolase (255 aa).

Positions 56, 58, 60, 61, 114, 133, and 171 each coordinate Zn(2+).

Belongs to the metallo-beta-lactamase superfamily. Glyoxalase II family. In terms of assembly, monomer. Requires Zn(2+) as cofactor.

It catalyses the reaction an S-(2-hydroxyacyl)glutathione + H2O = a 2-hydroxy carboxylate + glutathione + H(+). It participates in secondary metabolite metabolism; methylglyoxal degradation; (R)-lactate from methylglyoxal: step 2/2. Its function is as follows. Thiolesterase that catalyzes the hydrolysis of S-D-lactoyl-glutathione to form glutathione and D-lactic acid. In Bradyrhizobium diazoefficiens (strain JCM 10833 / BCRC 13528 / IAM 13628 / NBRC 14792 / USDA 110), this protein is Hydroxyacylglutathione hydrolase.